A 2541-amino-acid polypeptide reads, in one-letter code: Highly reducing polyketide synthase otaA (2541 aa).

In terms of domain architecture, Ketosynthase family 3 (KS3) spans Ser-9–Asp-431. Catalysis depends on for beta-ketoacyl synthase activity residues Cys-182, His-317, and His-355. The region spanning Phe-571–Asp-888 is the Malonyl-CoA:ACP transacylase (MAT) domain. The tract at residues His-957 to His-1092 is N-terminal hotdog fold. Residues His-957–Ser-1251 form a dehydratase (DH) domain region. A PKS/mFAS DH domain is found at His-957–Ala-1254. The C-terminal hotdog fold stretch occupies residues Thr-1108–Ala-1254. Ile-1420 and Glu-1442 together coordinate S-adenosyl-L-methionine. Positions His-1433–Gln-1605 are methyltransferase (CMeT) domain. The Enoyl reductase (ER) domain maps to His-1838 to Leu-2141. Residues Ala-2165 to Val-2344 form the Ketoreductase (KR) domain. Positions Asp-2453–Ser-2530 constitute a Carrier domain. Residue Ser-2490 is modified to O-(pantetheine 4'-phosphoryl)serine.

The cofactor is pantetheine 4'-phosphate.

It catalyses the reaction 4 malonyl-CoA + acetyl-CoA + 5 NADPH + 9 H(+) = 7-methylmellein + 3 CO2 + 5 NADP(+) + 5 CoA + 4 H2O. Its pathway is mycotoxin biosynthesis. Functionally, highly reducing polyketide synthase; part of the gene cluster that mediates the biosynthesis of ochratoxin A (OTA), a mycotoxin composed of a chlorinated type I polyketide dihydroisocoumarin moiety linked to L-phenylalanine, and demonstrated to have nephrotoxic, immunotoxic, genotoxic, neurotoxic, and teratogenic properties. OtaA catalyzes the condensation of one acetate and 4 malonate units to form the isocoumarin group. The pathway begins with the highly reducing polyketide synthase otaA that catalyzes the formation of the isocoumarin group during the initial stages of biosynthesis, starting from one acetate and 4 malonate units, to originate the characteristic pentaketide skeleton 7-methylmellein (7-MM) of the OTA molecule. The newly identified cyclase otaY might be involved in the polyketide cyclization reaction during the initial steps of the OTA biosynthesis. 7-MM is then oxidized into 7-carboxymellein (also called ochratoxin beta) by the cytochrome P450 monooxygenase otaC. The NRPS encoded by the otaB gene is involved in the linking of phenylalanine to the dihydroisocoumarin ring. The reaction catalyzed by NRPS results in the production of ochratoxin B (OTB), which is the non-chlorinated analog of OTA and which subsequently serves as the substrate of the halogenase otaD for chlorination activity to form the final molecular structure of OTA, containing a chlorine atom in the C-5 position of the molecule. This Aspergillus carbonarius (strain ITEM 5010) protein is Highly reducing polyketide synthase otaA.